The primary structure comprises 378 residues: Glutamate 5-kinase (378 aa).

Position 17 (lysine 17) interacts with ATP. Serine 58, aspartate 145, and asparagine 157 together coordinate substrate. Residues 177–178 (TD) and 221–227 (TGGMMTK) each bind ATP. The PUA domain maps to 286-364 (VGKLYLDSGA…KEIPTILGYV (79 aa)).

This sequence belongs to the glutamate 5-kinase family.

It localises to the cytoplasm. The catalysed reaction is L-glutamate + ATP = L-glutamyl 5-phosphate + ADP. It functions in the pathway amino-acid biosynthesis; L-proline biosynthesis; L-glutamate 5-semialdehyde from L-glutamate: step 1/2. Catalyzes the transfer of a phosphate group to glutamate to form L-glutamate 5-phosphate. In Nostoc sp. (strain PCC 7120 / SAG 25.82 / UTEX 2576), this protein is Glutamate 5-kinase.